Reading from the N-terminus, the 441-residue chain is MGSSHLLNKGLPLGVRPPIMNGPMHPRPLVALLDGRDCTVEMPILKDVATVAFCDAQSTQEIHEKVLNEAVGALMYHTITLTREDLEKFKALRIIVRIGSGFDNIDIKSAGDLGIAVCNVPAASVEETADSTLCHILNLYRRTTWLHQALREGTRVQSVEQIREVASGAARIRGETLGIIGLGRVGQAVALRAKAFGFNVLFYDPYLSDGIERALGLQRVSTLQDLLFHSDCVTLHCGLNEHNHHLINDFTVKQMRQGAFLVNTARGGLVDEKALAQALKEGRIRGAALDVHESEPFSFSQGPLKDAPNLICTPHAAWYSEQASIEMREEAAREIRRAITGRIPDSLKNCVNKDHLTAATHWASMDPAVVHPELNGAAYSRYPPGVVSVAPTGIPAAVEGIVPSAMSLSHGLPPVAHPPHAPSPGQTVKPEADRDHTSDQL.

Residues 1–70 (MGSSHLLNKG…EIHEKVLNEA (70 aa)) are interaction with GLIS2 1. Residues S100, 180-185 (IGLGRV), D204, 237-243 (CGLNEHN), 264-266 (TAR), and D290 each bind NAD(+). R266 is a catalytic residue. The segment at 288–360 (ALDVHESEPF…VNKDHLTAAT (73 aa)) is interaction with GLIS2 2. E295 is a catalytic residue. S300 carries the phosphoserine modification. H315 acts as the Proton donor in catalysis. 315-318 (HAAW) serves as a coordination point for NAD(+). Residues 409–441 (SHGLPPVAHPPHAPSPGQTVKPEADRDHTSDQL) are disordered. S423 bears the Phosphoserine mark. K429 participates in a covalent cross-link: Glycyl lysine isopeptide (Lys-Gly) (interchain with G-Cter in SUMO). The segment covering 430–441 (PEADRDHTSDQL) has biased composition (basic and acidic residues).

This sequence belongs to the D-isomer specific 2-hydroxyacid dehydrogenase family. Homo- or heterodimer. Heterodimer with CTBP2. Interacts with ELK3 (via its PXDLS motif). Interacts with RBBP8 (via its PXDLS motif). Interacts with PNN, MECOM and ZFHX1B. Interacts with ZNF366 (via PXDLS motif). Interaction with SATB1 (non-acetylated form); the interaction stabilizes its attachment to DNA and promotes transcription repression. Interacts with PRDM16; the interaction represses white adipose tissue (WAT)-specific genes expression. Interacts with GLIS2, HIPK2, FOXP1, FOXP2, HDAC4, HDAC5, HDAC9, NRIP1, WIZ and ZNF217. Interacts with BCL6; the interaction is required for BCL6 transcriptional autoinhibition and inhibition of some BCL6 target genes. Interacts with IKZF4. Interacts with MCRIP1 (unphosphorylated form, via the PXDLS motif); competitively inhibiting CTBP-ZEB1 interaction. Interacts with Bassoon/BSN; this interaction targets and anchors CTBP1 to presynapses. Interacts with SIMC1. The cofactor is NAD(+). ADP-ribosylated; when cells are exposed to brefeldin A. In terms of processing, the level of phosphorylation appears to be regulated during the cell cycle. Phosphorylation by HIPK2 on Ser-423 induces proteasomal degradation. Post-translationally, sumoylation on Lys-429 is promoted by the E3 SUMO-protein ligase CBX4. As to expression, expressed in a wide range of adult tissues.

The protein resides in the cytoplasm. Its subcellular location is the nucleus. Corepressor targeting diverse transcription regulators such as GLIS2 or BCL6. Has dehydrogenase activity. Involved in controlling the equilibrium between tubular and stacked structures in the Golgi complex. Functions in brown adipose tissue (BAT) differentiation. This is C-terminal-binding protein 1 (Ctbp1) from Mus musculus (Mouse).